The sequence spans 627 residues: UvrABC system protein C (627 aa).

Residues 22–100 form the GIY-YIG domain; the sequence is NNPGVYRMFN…IKRLRPRFNV (79 aa). Residues 210-245 enclose the UVR domain; the sequence is QSVKDHLAAAMQAASADLDFEHAAVYRDRLAALSHV.

The protein belongs to the UvrC family. As to quaternary structure, interacts with UvrB in an incision complex.

Its subcellular location is the cytoplasm. In terms of biological role, the UvrABC repair system catalyzes the recognition and processing of DNA lesions. UvrC both incises the 5' and 3' sides of the lesion. The N-terminal half is responsible for the 3' incision and the C-terminal half is responsible for the 5' incision. The polypeptide is UvrABC system protein C (Brucella abortus biovar 1 (strain 9-941)).